The chain runs to 158 residues: Siroheme decarboxylase beta subunit (158 aa).

It belongs to the Ahb/Nir family. As to quaternary structure, forms a heterodimer composed of AhbA and AhbB.

The enzyme catalyses siroheme + 2 H(+) = 12,18-didecarboxysiroheme + 2 CO2. It functions in the pathway porphyrin-containing compound metabolism; protoheme biosynthesis. Its function is as follows. Involved in siroheme-dependent heme b biosynthesis. Catalyzes the decarboxylation of siroheme into didecarboxysiroheme. This chain is Siroheme decarboxylase beta subunit, found in Oleidesulfovibrio alaskensis (strain ATCC BAA-1058 / DSM 17464 / G20) (Desulfovibrio alaskensis).